The sequence spans 335 residues: DNA-directed RNA polymerase subunit alpha (335 aa).

Residues 1-233 form an alpha N-terminal domain (alpha-NTD) region; sequence MVREKITVST…DLFIPFLHME (233 aa). Positions 265–335 are alpha C-terminal domain (alpha-CTD); sequence KEIALKSIFI…KQLVIFLPKK (71 aa).

This sequence belongs to the RNA polymerase alpha chain family. In plastids the minimal PEP RNA polymerase catalytic core is composed of four subunits: alpha, beta, beta', and beta''. When a (nuclear-encoded) sigma factor is associated with the core the holoenzyme is formed, which can initiate transcription.

Its subcellular location is the plastid. It is found in the chloroplast. It catalyses the reaction RNA(n) + a ribonucleoside 5'-triphosphate = RNA(n+1) + diphosphate. In terms of biological role, DNA-dependent RNA polymerase catalyzes the transcription of DNA into RNA using the four ribonucleoside triphosphates as substrates. This chain is DNA-directed RNA polymerase subunit alpha, found in Coffea arabica (Arabian coffee).